The sequence spans 473 residues: MKTDTPSLETPQAARLRRRQLIRQLLERDKTPLAILFMAAVVGTLVGLAAVAFDKGVAWLQNQRMGALVHTADNYPLLLTVAFLCSAVLAMFGYFLVRKYAPEAGGSGIPEIEGALEDQRPVRWWRVLPVKFFGGLGTLGGGMVLGREGPTVQIGGNIGRMVLDVFRLKGDEARHTLLATGAAAGLAAAFNAPLAGILFIIEEMRPQFRYTLISIKAVFIGVIMSTIMYRIFNHEVALIDVGKLSDAPLNTLWLYLILGIIFGIFGPIFNKWVLGMQDLLHRVHGGNITKWVLMGGAIGGLCGLLGFVAPATSGGGFNLIPIATAGNFSMGMLVFIFVARVITTLLCFSSGAPGGIFAPMLALGTVLGTAFGMVAVELFPQYHLEAGTFAIAGMGALLAASIRAPLTGIILVLEMTDNYQLILPMIITGLGATLLAQFTGGKPLYSAILARTLAKQEAEQLARSKAASASENT.

Residues 1–32 (MKTDTPSLETPQAARLRRRQLIRQLLERDKTP) are Cytoplasmic-facing. A helical membrane pass occupies residues 33 to 69 (LAILFMAAVVGTLVGLAAVAFDKGVAWLQNQRMGALV). Topologically, residues 70 to 76 (HTADNYP) are periplasmic. A helical membrane pass occupies residues 77–100 (LLLTVAFLCSAVLAMFGYFLVRKY). Positions 106 to 110 (GSGIP) match the Selectivity filter part_1 motif. Residue S107 coordinates chloride. Positions 109–116 (IPEIEGAL) form an intramembrane region, helical. Residues 117–123 (EDQRPVR) lie on the Cytoplasmic side of the membrane. Transmembrane regions (helical) follow at residues 124–141 (WWRVLPVKFFGGLGTLGG) and 148–166 (EGPTVQIGGNIGRMVLDVF). The short motif at 146-150 (GREGP) is the Selectivity filter part_2 element. Over 167-176 (RLKGDEARHT) the chain is Cytoplasmic. Intramembrane regions (helical) lie at residues 177 to 189 (LLATGAAAGLAAA) and 193 to 201 (PLAGILFII). The Cytoplasmic segment spans residues 202 to 214 (EEMRPQFRYTLIS). A helical membrane pass occupies residues 215-232 (IKAVFIGVIMSTIMYRIF). Residues 233 to 252 (NHEVALIDVGKLSDAPLNTL) lie on the Periplasmic side of the membrane. Residues 253–281 (WLYLILGIIFGIFGPIFNKWVLGMQDLLH) form a helical membrane-spanning segment. Residues 282–287 (RVHGGN) lie on the Cytoplasmic side of the membrane. A helical transmembrane segment spans residues 288–309 (ITKWVLMGGAIGGLCGLLGFVA). The Periplasmic segment spans residues 310–329 (PATSGGGFNLIPIATAGNFS). Transmembrane regions (helical) follow at residues 330 to 349 (MGMLVFIFVARVITTLLCFS) and 355 to 376 (GIFAPMLALGTVLGTAFGMVAV). Positions 355-359 (GIFAP) match the Selectivity filter part_3 motif. Residues I356 and F357 each coordinate chloride. The Periplasmic segment spans residues 377–386 (ELFPQYHLEA). Positions 387-401 (GTFAIAGMGALLAAS) form an intramembrane region, helical. An intramembrane region (note=Loop between two helices) is located at residues 402 to 404 (IRA). Positions 405–416 (PLTGIILVLEMT) form an intramembrane region, helical. Residues 417–421 (DNYQL) constitute an intramembrane region (note=Loop between two helices). Residues 422–438 (ILPMIITGLGATLLAQF) form a helical membrane-spanning segment. Residues 439-473 (TGGKPLYSAILARTLAKQEAEQLARSKAASASENT) lie on the Cytoplasmic side of the membrane. Position 445 (Y445) interacts with chloride.

It belongs to the chloride channel (TC 2.A.49) family. ClcA subfamily. As to quaternary structure, homodimer.

It localises to the cell inner membrane. It carries out the reaction 2 chloride(in) + H(+)(out) = 2 chloride(out) + H(+)(in). Functionally, proton-coupled chloride transporter. Functions as antiport system and exchanges two chloride ions for 1 proton. Probably acts as an electrical shunt for an outwardly-directed proton pump that is linked to amino acid decarboxylation, as part of the extreme acid resistance (XAR) response. This Escherichia coli O157:H7 protein is H(+)/Cl(-) exchange transporter ClcA.